We begin with the raw amino-acid sequence, 35 residues long: Phospholipase A2 neuwieditoxin-1 (35 aa).

Residues Y27, G29, and G31 each contribute to the Ca(2+) site.

It belongs to the phospholipase A2 family. Group II subfamily. D49 sub-subfamily. As to quaternary structure, dimer. Requires Ca(2+) as cofactor. In terms of tissue distribution, expressed by the venom gland.

The protein resides in the secreted. It catalyses the reaction a 1,2-diacyl-sn-glycero-3-phosphocholine + H2O = a 1-acyl-sn-glycero-3-phosphocholine + a fatty acid + H(+). In terms of biological role, snake venom phospholipase A2 (PLA2) that shows presynaptic neurotoxicity. 10 ug/ml of this protein produce complete neuromuscular blockade up to 80 minutes, without inhibiting the responses to acetylcholine (ACh) and potassium chloride (KCl). In addition, it produces a calcium-dependent blockade of acetylcholine release and causes appearance of giant miniature end-plate potentials. PLA2 catalyzes the calcium-dependent hydrolysis of the 2-acyl groups in 3-sn-phosphoglycerides. The chain is Phospholipase A2 neuwieditoxin-1 from Bothrops pauloensis (Neuwied's lancehead).